Reading from the N-terminus, the 306-residue chain is Oxygen-dependent coproporphyrinogen-III oxidase (306 aa).

A substrate-binding site is contributed by S94. The a divalent metal cation site is built by H98 and H108. H108 serves as the catalytic Proton donor. 110–112 (NVR) serves as a coordination point for substrate. A divalent metal cation contacts are provided by H147 and H177. Positions 242-277 (YVEFNLVYDRGTLFGLQTGGRTESILMSMPPLVRWE) are important for dimerization. A substrate-binding site is contributed by 260–262 (GGR).

It belongs to the aerobic coproporphyrinogen-III oxidase family. Homodimer. The cofactor is a divalent metal cation.

The protein localises to the cytoplasm. The catalysed reaction is coproporphyrinogen III + O2 + 2 H(+) = protoporphyrinogen IX + 2 CO2 + 2 H2O. It participates in porphyrin-containing compound metabolism; protoporphyrin-IX biosynthesis; protoporphyrinogen-IX from coproporphyrinogen-III (O2 route): step 1/1. Involved in the heme biosynthesis. Catalyzes the aerobic oxidative decarboxylation of propionate groups of rings A and B of coproporphyrinogen-III to yield the vinyl groups in protoporphyrinogen-IX. The protein is Oxygen-dependent coproporphyrinogen-III oxidase of Shewanella woodyi (strain ATCC 51908 / MS32).